The chain runs to 494 residues: BTB/POZ domain and ankyrin repeat-containing protein NH5.2 (494 aa).

Residues 25–131 (SDVAFSVEGR…LYSGQASVAA (107 aa)) enclose the BTB domain. A disordered region spans residues 60 to 95 (NHQPPPPPPPPLNWPTAGGGGGGSGGGGRGGAGGGG). Residues 61-72 (HQPPPPPPPPLN) show a composition bias toward pro residues. Residues 76–95 (AGGGGGGSGGGGRGGAGGGG) show a composition bias toward gly residues. Residues 137-151 (LPGCGARGCWHTRCG) form a C2HC NPR-type zinc finger. Zn(2+)-binding residues include Cys-140, Cys-145, His-147, and Cys-150. ANK repeat units follow at residues 275 to 303 (NKIR…GLDL), 304 to 334 (DDAL…DVNS), 339 to 368 (TGKT…DPNS), and 372 to 406 (DGVT…KLRL). 2 disordered regions span residues 421 to 443 (DDGA…PRSD) and 471 to 494 (GEGR…NGFA).

The protein belongs to the plant 'ANKYRIN-BTB/POZ' family. 'NOOT-BOP-COCH-like' (NBCL) subfamily. In terms of assembly, homodimer. Interacts with TGAL5, TGAL7, TGAL8 and TGAL9.

It localises to the nucleus. The protein resides in the cytoplasm. The protein operates within protein modification; protein ubiquitination. May act as a substrate-specific adapter of an E3 ubiquitin-protein ligase complex (CUL3-RBX1-BTB) which mediates the ubiquitination and subsequent proteasomal degradation of target proteins. Transcriptional co-regulator involved in the promotion of leaf and floral meristem fate and determinacy. Required for the abscission of senescent organs, probably by regulating the cell wall disorganization in abscission zones (AZs, e.g. pulvini at the base of leaves). This is BTB/POZ domain and ankyrin repeat-containing protein NH5.2 from Oryza sativa subsp. japonica (Rice).